A 180-amino-acid chain; its full sequence is Ribosome maturation factor RimM (180 aa).

One can recognise a PRC barrel domain in the interval 103 to 176 (GDIWWDRDLV…RIVVDPPPGL (74 aa)).

It belongs to the RimM family. Binds ribosomal protein uS19.

It is found in the cytoplasm. Functionally, an accessory protein needed during the final step in the assembly of 30S ribosomal subunit, possibly for assembly of the head region. Essential for efficient processing of 16S rRNA. May be needed both before and after RbfA during the maturation of 16S rRNA. It has affinity for free ribosomal 30S subunits but not for 70S ribosomes. This chain is Ribosome maturation factor RimM, found in Frankia alni (strain DSM 45986 / CECT 9034 / ACN14a).